Here is a 683-residue protein sequence, read N- to C-terminus: MNTSIPYQQNPYNPRGSSNVIQCYRCGDTCKGEVVRVHNNHFHIRCFTCQVCGCGLAQSGFFFKNQEYICTQDYQQLYGTRCDSCRDFITGEVISALGRTYHPKCFVCSLCRKPFPIGDKVTFSGKECVCQTCSQSMASSKPIKIRGPSHCAGCKEEIKHGQSLLALDKQWHVSCFKCQTCSVILTGEYISKDGVPYCESDYHAQFGIKCETCDRYISGRVLEAGGKHYHPTCARCVRCHQMFTEGEEMYLTGSEVWHPICKQAARAEKKLKHRRTSETSISPPGSSIGSPNRVICAKVDNEILNYKDLAALPKVKSIYEVQRPDLISYEPHSRYMSDEMLERCGYGESLGTLSPYSQDIYENLDLRQRRASSPGYIDSPTYSRQGMSPTFSRSPHHYYRSGPESGRSSPYHSQLDVRSSTPTSYQAPKHFHIPAGDSNIYRKPPIYKRHGDLSTATKSKTSEDISQTSKYSPIYSPDPYYASESEYWTYHGSPKVPRARRFSSGGEEDDFDRSMHKLQSGIGRLILKEEMKARSSSYADPWTPPRSSTSSREALHTAGYEMSLNGSPRSHYLADSDPLISKSASLPAYRRNGLHRTPSADLFHYDSMNAVNWGMREYKIYPYELLLVTTRGRNRLPKDVDRTRLERHLSQEEFYQVFGMTISEFDRLALWKRNELKKQARLF.

Methionine 1 is modified (N-acetylmethionine). LIM zinc-binding domains are found at residues 21-80, 80-140, 149-208, and 208-268; these read IQCY…LYGT, TRCD…MASS, SHCA…QFGI, and IKCE…ARAE. A phosphoserine mark is found at serine 277, serine 280, serine 282, serine 286, serine 290, serine 337, serine 372, and serine 373. A disordered region spans residues 372-472; that stretch reads SSPGYIDSPT…EDISQTSKYS (101 aa). Tyrosine 376 bears the Phosphotyrosine mark. Serine 379 and serine 388 each carry phosphoserine. 3 stretches are compositionally biased toward polar residues: residues 380-393, 406-426, and 454-471; these read PTYSRQGMSPTFSR, GRSSPYHSQLDVRSSTPTSYQ, and STATKSKTSEDISQTSKY. Residues serine 493, serine 503, and serine 504 each carry the phosphoserine modification. Threonine 543 carries the post-translational modification Phosphothreonine. Phosphoserine is present on residues serine 567, serine 576, and serine 607. Positions 615 to 683 constitute an HP domain; the sequence is MREYKIYPYE…NELKKQARLF (69 aa). Arginine 631 carries the omega-N-methylarginine modification.

Directly interacts with F-actin and ABRA. As to expression, expressed predominantly in heart and brain.

The protein resides in the cytoplasm. Its function is as follows. May act as scaffold protein. May stimulate ABRA activity and ABRA-dependent SRF transcriptional activity. This chain is Actin-binding LIM protein 3 (ABLIM3), found in Homo sapiens (Human).